We begin with the raw amino-acid sequence, 528 residues long: MDAKALWQRYQEWLYFHEGLGLYLDVSRMRFDDAFVKSLLPKFDKAFADMAELEKGAIANPDENRMVGHYWLRNPDLAPTPEIAQEIVQTLEQIEAFAEKIQTGAIHPPKANRFTDIISIGIGGSALGPQFVAEALAPEFPPLKIHFIDNTDPAGIDRILTHLRNHLASTLVLVISKSGGTPEPRNGMIEVKKAYAGQNLDFAQYAVAITSTGSNLDKVAQSEGWLATFPMYDWVGGRTSEMSSVGLVPAALQGIDVRAMLEGAKEMDDATRVPEVKNNPAALLALSWYYSGNGKGEKDMVVLPYKDSLLLFSRYLQQLVMESLGKEKDLDGNTVYQGIAVYGNKGSTDQHAYVQQLREGVPNFFATLIEVLEDRHGASPEIDPGVTSGDYLSGFLLGTRQALYENQRDSITVTIPQVNARTVGALVALYERTVGLYASLVNINAYHQPGVEAGKKAAAVILDLQTKVVGLLQKEKTALSLEQIAEKIGAADQVEAIYKILRHLQANQRGVVFQGNLGQPSSLKISLS.

Glu322 functions as the Proton donor in the catalytic mechanism. Catalysis depends on residues His351 and Lys455.

It belongs to the GPI family.

It is found in the cytoplasm. It catalyses the reaction alpha-D-glucose 6-phosphate = beta-D-fructose 6-phosphate. It participates in carbohydrate biosynthesis; gluconeogenesis. Its pathway is carbohydrate degradation; glycolysis; D-glyceraldehyde 3-phosphate and glycerone phosphate from D-glucose: step 2/4. In terms of biological role, catalyzes the reversible isomerization of glucose-6-phosphate to fructose-6-phosphate. The chain is Glucose-6-phosphate isomerase from Nostoc sp. (strain PCC 7120 / SAG 25.82 / UTEX 2576).